Here is a 161-residue protein sequence, read N- to C-terminus: Protein OPG060 (161 aa).

This sequence belongs to the orthopoxvirus OPG058 family.

This is Protein OPG060 (OPG060) from Homo sapiens (Human).